The following is a 229-amino-acid chain: Type III pantothenate kinase (229 aa).

6 to 13 (NIGNSRQH) contributes to the ATP binding site. Substrate is bound by residues tyrosine 77 and 81 to 84 (GIDR). The active-site Proton acceptor is the aspartate 83. K(+) is bound at residue aspartate 103. ATP is bound at residue threonine 106. Threonine 159 is a binding site for substrate.

The protein belongs to the type III pantothenate kinase family. Homodimer. NH4(+) serves as cofactor. K(+) is required as a cofactor.

The protein resides in the cytoplasm. It catalyses the reaction (R)-pantothenate + ATP = (R)-4'-phosphopantothenate + ADP + H(+). The protein operates within cofactor biosynthesis; coenzyme A biosynthesis; CoA from (R)-pantothenate: step 1/5. In terms of biological role, catalyzes the phosphorylation of pantothenate (Pan), the first step in CoA biosynthesis. The sequence is that of Type III pantothenate kinase from Gloeobacter violaceus (strain ATCC 29082 / PCC 7421).